A 325-amino-acid chain; its full sequence is UPF0285 protein MmarC5_0962 (325 aa).

This sequence belongs to the UPF0285 family.

The chain is UPF0285 protein MmarC5_0962 from Methanococcus maripaludis (strain C5 / ATCC BAA-1333).